Consider the following 55-residue polypeptide: Conotoxin Cal22d (55 aa).

The propeptide occupies 1–5 (GRPSA).

In terms of processing, contains 4 disulfide bonds. As to expression, expressed by the venom duct.

The protein localises to the secreted. Its function is as follows. Probable neurotoxin with unknown target. Possibly targets ion channels. In Californiconus californicus (California cone), this protein is Conotoxin Cal22d.